A 220-amino-acid polypeptide reads, in one-letter code: NADH-quinone oxidoreductase subunit I (220 aa).

2 consecutive 4Fe-4S ferredoxin-type domains span residues 71 to 102 (LQRLLDSGSERCIGCGLCEKICTSNCIRIITH) and 112 to 141 (DSYTINLGRCIYCGLCAEVCPELAIVMGNR). 8 residues coordinate [4Fe-4S] cluster: cysteine 82, cysteine 85, cysteine 88, cysteine 92, cysteine 121, cysteine 124, cysteine 127, and cysteine 131. Residues 187–220 (MQATPLDYVQEPSKEESKEETPTRSESHKGDENV) form a disordered region. A compositionally biased stretch (basic and acidic residues) spans 198 to 220 (PSKEESKEETPTRSESHKGDENV).

It belongs to the complex I 23 kDa subunit family. As to quaternary structure, NDH-1 is composed of 14 different subunits. Subunits NuoA, H, J, K, L, M, N constitute the membrane sector of the complex. [4Fe-4S] cluster is required as a cofactor.

It localises to the cell inner membrane. It carries out the reaction a quinone + NADH + 5 H(+)(in) = a quinol + NAD(+) + 4 H(+)(out). NDH-1 shuttles electrons from NADH, via FMN and iron-sulfur (Fe-S) centers, to quinones in the respiratory chain. The immediate electron acceptor for the enzyme in this species is believed to be ubiquinone. Couples the redox reaction to proton translocation (for every two electrons transferred, four hydrogen ions are translocated across the cytoplasmic membrane), and thus conserves the redox energy in a proton gradient. This is NADH-quinone oxidoreductase subunit I from Helicobacter pylori (strain G27).